Here is a 114-residue protein sequence, read N- to C-terminus: uncharacterized protein (114 aa).

A signal peptide spans 1–19; the sequence is MKASYLVLIFISIFSMAQA. Phosphoserine is present on Ser41.

This sequence belongs to the protease inhibitor I9 family.

This is an uncharacterized protein from Saccharomyces cerevisiae (strain ATCC 204508 / S288c) (Baker's yeast).